Consider the following 1399-residue polypeptide: DNA-directed RNA polymerase subunit beta' (1399 aa).

Zn(2+) contacts are provided by Cys-70, Cys-72, Cys-85, and Cys-88. The Mg(2+) site is built by Asp-460, Asp-462, and Asp-464. Residues Cys-814, Cys-888, Cys-895, and Cys-898 each contribute to the Zn(2+) site.

This sequence belongs to the RNA polymerase beta' chain family. The RNAP catalytic core consists of 2 alpha, 1 beta, 1 beta' and 1 omega subunit. When a sigma factor is associated with the core the holoenzyme is formed, which can initiate transcription. Mg(2+) is required as a cofactor. Zn(2+) serves as cofactor.

The enzyme catalyses RNA(n) + a ribonucleoside 5'-triphosphate = RNA(n+1) + diphosphate. DNA-dependent RNA polymerase catalyzes the transcription of DNA into RNA using the four ribonucleoside triphosphates as substrates. This chain is DNA-directed RNA polymerase subunit beta', found in Ectopseudomonas mendocina (strain ymp) (Pseudomonas mendocina).